Here is a 146-residue protein sequence, read N- to C-terminus: Small ribosomal subunit protein uS5 (146 aa).

Residues 8 to 71 (FEESIVNIGR…DNAFKNLSKV (64 aa)) form the S5 DRBM domain.

Belongs to the universal ribosomal protein uS5 family. In terms of assembly, part of the 30S ribosomal subunit. Contacts proteins S4 and S8.

Its function is as follows. With S4 and S12 plays an important role in translational accuracy. Functionally, located at the back of the 30S subunit body where it stabilizes the conformation of the head with respect to the body. This Sulfurimonas denitrificans (strain ATCC 33889 / DSM 1251) (Thiomicrospira denitrificans (strain ATCC 33889 / DSM 1251)) protein is Small ribosomal subunit protein uS5.